We begin with the raw amino-acid sequence, 353 residues long: 4-hydroxy-3-methylbut-2-en-1-yl diphosphate synthase (flavodoxin) (353 aa).

Residues Cys265, Cys268, Cys300, and Glu307 each coordinate [4Fe-4S] cluster.

This sequence belongs to the IspG family. It depends on [4Fe-4S] cluster as a cofactor.

It catalyses the reaction (2E)-4-hydroxy-3-methylbut-2-enyl diphosphate + oxidized [flavodoxin] + H2O + 2 H(+) = 2-C-methyl-D-erythritol 2,4-cyclic diphosphate + reduced [flavodoxin]. The protein operates within isoprenoid biosynthesis; isopentenyl diphosphate biosynthesis via DXP pathway; isopentenyl diphosphate from 1-deoxy-D-xylulose 5-phosphate: step 5/6. In terms of biological role, converts 2C-methyl-D-erythritol 2,4-cyclodiphosphate (ME-2,4cPP) into 1-hydroxy-2-methyl-2-(E)-butenyl 4-diphosphate. The polypeptide is 4-hydroxy-3-methylbut-2-en-1-yl diphosphate synthase (flavodoxin) (Sulfurihydrogenibium sp. (strain YO3AOP1)).